The sequence spans 81 residues: MASNEEILAGLAEIVNEETGLATEAVELDKSFTEDLDIDSISMMTIVVNAEEKFGVRIPDEEVKNLKTVGDAVSFIANAQA.

Positions 2–80 constitute a Carrier domain; the sequence is ASNEEILAGL…DAVSFIANAQ (79 aa). Position 40 is an O-(pantetheine 4'-phosphoryl)serine (S40).

It belongs to the acyl carrier protein (ACP) family. Post-translationally, 4'-phosphopantetheine is transferred from CoA to a specific serine of apo-ACP by AcpS. This modification is essential for activity because fatty acids are bound in thioester linkage to the sulfhydryl of the prosthetic group.

It is found in the cytoplasm. The protein operates within lipid metabolism; fatty acid biosynthesis. In terms of biological role, carrier of the growing fatty acid chain in fatty acid biosynthesis. The protein is Acyl carrier protein of Paenarthrobacter aurescens (strain TC1).